We begin with the raw amino-acid sequence, 316 residues long: DNA-directed RNA polymerase subunit alpha (316 aa).

Positions Met-1–Ser-232 are alpha N-terminal domain (alpha-NTD). The interval Lys-247–Tyr-316 is alpha C-terminal domain (alpha-CTD).

Belongs to the RNA polymerase alpha chain family. As to quaternary structure, in plastids the minimal PEP RNA polymerase catalytic core is composed of four subunits: alpha, beta, beta', and beta''. When a (nuclear-encoded) sigma factor is associated with the core the holoenzyme is formed, which can initiate transcription.

It localises to the plastid. It is found in the chloroplast. The enzyme catalyses RNA(n) + a ribonucleoside 5'-triphosphate = RNA(n+1) + diphosphate. DNA-dependent RNA polymerase catalyzes the transcription of DNA into RNA using the four ribonucleoside triphosphates as substrates. The chain is DNA-directed RNA polymerase subunit alpha from Mesostigma viride (Green alga).